Consider the following 418-residue polypeptide: Glutamyl-tRNA reductase (418 aa).

Substrate is bound by residues 49–52 (TCNR), Ser-109, 114–116 (EPQ), and Gln-120. Cys-50 (nucleophile) is an active-site residue. Position 189–194 (189–194 (GAGETI)) interacts with NADP(+).

It belongs to the glutamyl-tRNA reductase family. In terms of assembly, homodimer.

It catalyses the reaction (S)-4-amino-5-oxopentanoate + tRNA(Glu) + NADP(+) = L-glutamyl-tRNA(Glu) + NADPH + H(+). It participates in porphyrin-containing compound metabolism; protoporphyrin-IX biosynthesis; 5-aminolevulinate from L-glutamyl-tRNA(Glu): step 1/2. In terms of biological role, catalyzes the NADPH-dependent reduction of glutamyl-tRNA(Glu) to glutamate 1-semialdehyde (GSA). In Escherichia coli O157:H7, this protein is Glutamyl-tRNA reductase.